The sequence spans 142 residues: ATP synthase epsilon chain (142 aa).

It belongs to the ATPase epsilon chain family. In terms of assembly, F-type ATPases have 2 components, CF(1) - the catalytic core - and CF(0) - the membrane proton channel. CF(1) has five subunits: alpha(3), beta(3), gamma(1), delta(1), epsilon(1). CF(0) has three main subunits: a, b and c.

The protein localises to the cell inner membrane. Functionally, produces ATP from ADP in the presence of a proton gradient across the membrane. This Shewanella baltica (strain OS185) protein is ATP synthase epsilon chain.